Consider the following 299-residue polypeptide: Taste receptor type 2 member 50 (299 aa).

Position 1 (Met-1) is a topological domain, extracellular. Residues 2-22 (ITFLYIFFSILIMVLFVLGNF) traverse the membrane as a helical segment. Over 23-55 (ANGFIALVNFIDWVKRKKISSADQILTALAVSR) the chain is Cytoplasmic. A helical transmembrane segment spans residues 56 to 76 (IGLLWALLLNWYLTVLNPAFY). At 77-87 (SVELRITSYNA) the chain is on the extracellular side. A helical transmembrane segment spans residues 88–108 (WVVTNHFSMWLAANLSIFYLL). Residues 109-126 (KIANFSNLLFLHLKRRVR) are Cytoplasmic-facing. Residues 127–147 (SVILVILLGTLIFLVCHLLVA) form a helical membrane-spanning segment. Topologically, residues 148–181 (NMDESMWAEEYEGNMTGKMKLRNTVHLSYLTVTT) are extracellular. Asn-161 carries an N-linked (GlcNAc...) asparagine glycan. Residues 182-202 (LWSFIPFTLSLISFLMLICSL) form a helical membrane-spanning segment. The Cytoplasmic segment spans residues 203-229 (CKHLKKMQLHGEGSQDLSTKVHIKALQ). A helical transmembrane segment spans residues 230–250 (TLISFLLLCAIFFLFLIVSVW). Residues 251 to 259 (SPRRLRNDP) are Extracellular-facing. Residues 260-280 (VVMVSKAVGNIYLAFDSFILI) form a helical membrane-spanning segment. Topologically, residues 281 to 299 (WRTKKLKHTFLLILCQIRC) are cytoplasmic.

The protein belongs to the G-protein coupled receptor T2R family. In terms of tissue distribution, expressed in subsets of taste receptor cells of the tongue and exclusively in gustducin-positive cells.

It localises to the membrane. In terms of biological role, receptor that may play a role in the perception of bitterness and is gustducin-linked. May play a role in sensing the chemical composition of the gastrointestinal content. The activity of this receptor may stimulate alpha gustducin, mediate PLC-beta-2 activation and lead to the gating of TRPM5. This Homo sapiens (Human) protein is Taste receptor type 2 member 50 (TAS2R50).